Reading from the N-terminus, the 513-residue chain is Maturase K (513 aa).

This sequence belongs to the intron maturase 2 family. MatK subfamily.

Its subcellular location is the plastid. The protein localises to the chloroplast. In terms of biological role, usually encoded in the trnK tRNA gene intron. Probably assists in splicing its own and other chloroplast group II introns. This chain is Maturase K, found in Typha angustifolia (Narrow leaf cattail).